Consider the following 438-residue polypeptide: MMYAPVEFSEAEFSRAEYQRKQQFWDSVRLALFTLAIVAIIGIAIGIVTHFVVEDDKSFYYLASFKVTNIKYKENYGIRSSREFIERSHQIERMMSRIFRHSSVGGRFIKSHVIKLSPDEQGVDILIVLIFRYPSTDSAEQIKKKIEKALYQSLKTKQLSLTINKPSFRLTPIDSKKMRNLLNSRCGIRMTSSNMPLPASSSTQRIVQGRETAMEGEWPWQASLQLIGSGHQCGASLISNTWLLTAAHCFWKNKDPTQWIATFGATITPPAVKRNVRKIILHENYHRETNENDIALVQLSTGVEFSNIVQRVCLPDSSIKLPPKTSVFVTGFGSIVDDGPIQNTLRQARVETISTDVCNRKDVYDGLITPGMLCAGFMEGKIDACKGDSGGPLVYDNHDIWYIVGIVSWGQSCALPKKPGVYTRVTKYRDWIASKTGM.

At 1-32 (MMYAPVEFSEAEFSRAEYQRKQQFWDSVRLAL) the chain is on the cytoplasmic side. The helical; Signal-anchor for type II membrane protein transmembrane segment at 33–53 (FTLAIVAIIGIAIGIVTHFVV) threads the bilayer. The Extracellular portion of the chain corresponds to 54–438 (EDDKSFYYLA…RDWIASKTGM (385 aa)). Positions 57-175 (KSFYYLASFK…PSFRLTPIDS (119 aa)) constitute an SEA domain. Residues 206–437 (IVQGRETAME…YRDWIASKTG (232 aa)) form the Peptidase S1 domain. A disulfide bridge connects residues Cys233 and Cys249. Residues His248 and Asp293 each act as charge relay system in the active site. 2 cysteine pairs are disulfide-bonded: Cys358-Cys374 and Cys385-Cys413. Ser389 (charge relay system) is an active-site residue.

Belongs to the peptidase S1 family.

The protein localises to the membrane. Its function is as follows. Probable serine protease. The protein is Transmembrane protease serine 11F (TMPRSS11F) of Homo sapiens (Human).